Here is a 33-residue protein sequence, read N- to C-terminus: Cytochrome b6-f complex subunit 8 (33 aa).

A helical transmembrane segment spans residues 2–22 (LFTVAWASLAAMFSFSIAMVV).

This sequence belongs to the PetN family. The 4 large subunits of the cytochrome b6-f complex are cytochrome b6, subunit IV (17 kDa polypeptide, PetD), cytochrome f and the Rieske protein, while the 4 small subunits are PetG, PetL, PetM and PetN. The complex functions as a dimer.

Its subcellular location is the cellular thylakoid membrane. Its function is as follows. Component of the cytochrome b6-f complex, which mediates electron transfer between photosystem II (PSII) and photosystem I (PSI), cyclic electron flow around PSI, and state transitions. This Synechococcus sp. (strain CC9902) protein is Cytochrome b6-f complex subunit 8.